Consider the following 228-residue polypeptide: MQLTERERDKLLIFTAAQLARERRARGLKLNHPEAVALITAEVLEGIRDGRRVEDLMSFGAAILTPDDVLDGVPELIHEIQVEGTFPDGTKLVTVHDPIRGAASRRVAGEYLLEGGEIELNAGRPVTTLTVANTADRPVQVGSHFHFFEVNAGLRFDRAAAYGFRLNIPAGTAVRFEPGEEREVDLVPLGGSRTVYGMNALVNGDLDAPGTREAALEGARAAGFGGAQ.

The urease gamma stretch occupies residues 1–101 (MQLTERERDK…LVTVHDPIRG (101 aa)). A urease beta region spans residues 102-228 (AASRRVAGEY…ARAAGFGGAQ (127 aa)).

It in the N-terminal section; belongs to the urease gamma subunit family. In the C-terminal section; belongs to the urease beta subunit family. Heterohexamer of 3 UreC (alpha) and 3 UreAB (gamma/beta) subunits.

It is found in the cytoplasm. It carries out the reaction urea + 2 H2O + H(+) = hydrogencarbonate + 2 NH4(+). It functions in the pathway nitrogen metabolism; urea degradation; CO(2) and NH(3) from urea (urease route): step 1/1. This Deinococcus radiodurans (strain ATCC 13939 / DSM 20539 / JCM 16871 / CCUG 27074 / LMG 4051 / NBRC 15346 / NCIMB 9279 / VKM B-1422 / R1) protein is Urease subunit gamma/beta.